The chain runs to 111 residues: Large ribosomal subunit protein uL22 (111 aa).

It belongs to the universal ribosomal protein uL22 family. Part of the 50S ribosomal subunit.

Its function is as follows. This protein binds specifically to 23S rRNA; its binding is stimulated by other ribosomal proteins, e.g. L4, L17, and L20. It is important during the early stages of 50S assembly. It makes multiple contacts with different domains of the 23S rRNA in the assembled 50S subunit and ribosome. The globular domain of the protein is located near the polypeptide exit tunnel on the outside of the subunit, while an extended beta-hairpin is found that lines the wall of the exit tunnel in the center of the 70S ribosome. In Acidithiobacillus ferrooxidans (strain ATCC 23270 / DSM 14882 / CIP 104768 / NCIMB 8455) (Ferrobacillus ferrooxidans (strain ATCC 23270)), this protein is Large ribosomal subunit protein uL22.